Here is a 148-residue protein sequence, read N- to C-terminus: uncharacterized protein (148 aa).

The span at Val-65–Asp-79 shows a compositional bias: low complexity. A disordered region spans residues Val-65–Gly-85.

This is an uncharacterized protein from Saccharomyces cerevisiae (strain ATCC 204508 / S288c) (Baker's yeast).